The chain runs to 304 residues: MKIGTRGSKLALAQAYLTRRLLQEAHGLPEDAIEILPMSTAGDRIQDRPLSEVGGKGLFTEEIEQALKDGRIDIAVHSTKDMPTVLPEGLHLSVFLEREDPRDAFIGRSARRFMDLPQGATVGSSSLRRQALIRRLRPDIEVVMYRGNVDTRLRKLDAGEVDGTFLACAGLRRLGLADVITDLLDPSVFPPAPGQGAIGIESRIGDERIDVLLAPLAHRETQIALACERAFLGALDGSCRTPIAGLATVEGDRLSFRGMILTPDGRQAHEVTAEGVVSDAAALGTDAANRVRAMAGPHFFDGWQ.

Cysteine 239 is subject to S-(dipyrrolylmethanemethyl)cysteine.

It belongs to the HMBS family. In terms of assembly, monomer. Requires dipyrromethane as cofactor.

It carries out the reaction 4 porphobilinogen + H2O = hydroxymethylbilane + 4 NH4(+). It functions in the pathway porphyrin-containing compound metabolism; protoporphyrin-IX biosynthesis; coproporphyrinogen-III from 5-aminolevulinate: step 2/4. In terms of biological role, tetrapolymerization of the monopyrrole PBG into the hydroxymethylbilane pre-uroporphyrinogen in several discrete steps. This is Porphobilinogen deaminase from Brucella ovis (strain ATCC 25840 / 63/290 / NCTC 10512).